The primary structure comprises 54 residues: Photosystem II reaction center protein K (54 aa).

Residues 1–17 constitute a propeptide that is removed on maturation; the sequence is MLLEHVTITLLNNTSFA. The helical transmembrane segment at 29-49 threads the bilayer; that stretch reads LIDVLPIIPLLFLLLAFVWQA.

Belongs to the PsbK family. PSII is composed of 1 copy each of membrane proteins PsbA, PsbB, PsbC, PsbD, PsbE, PsbF, PsbH, PsbI, PsbJ, PsbK, PsbL, PsbM, PsbT, PsbY, PsbZ, Psb30/Ycf12, at least 3 peripheral proteins of the oxygen-evolving complex and a large number of cofactors. It forms dimeric complexes.

The protein resides in the plastid. The protein localises to the chloroplast thylakoid membrane. Functionally, one of the components of the core complex of photosystem II (PSII). PSII is a light-driven water:plastoquinone oxidoreductase that uses light energy to abstract electrons from H(2)O, generating O(2) and a proton gradient subsequently used for ATP formation. It consists of a core antenna complex that captures photons, and an electron transfer chain that converts photonic excitation into a charge separation. This chain is Photosystem II reaction center protein K, found in Euglena mutabilis.